Here is a 92-residue protein sequence, read N- to C-terminus: Small ribosomal subunit protein bS20 (92 aa).

The segment at 1–25 (MANSAQARKRARQAAKANSHNSALR) is disordered.

The protein belongs to the bacterial ribosomal protein bS20 family.

Functionally, binds directly to 16S ribosomal RNA. The protein is Small ribosomal subunit protein bS20 of Paraburkholderia phymatum (strain DSM 17167 / CIP 108236 / LMG 21445 / STM815) (Burkholderia phymatum).